A 241-amino-acid chain; its full sequence is ATP synthase subunit 4, mitochondrial (241 aa).

The N-terminal 35 residues, 1–35, are a transit peptide targeting the mitochondrion; that stretch reads MASRLARTAVGAARLRPSVVPRVLPALSTVASPRY.

This sequence belongs to the eukaryotic ATPase B chain family. F-type ATPases have 2 components, CF(1) - the catalytic core - and CF(0) - the membrane proton channel. In yeast, the dimeric form of ATP synthase consists of 17 polypeptides: alpha, beta, gamma, delta, epsilon, 4 (B), 5 (OSCP), 6 (A), 8, 9 (C), d, E (Tim11), f, g, h, i/j and k.

It localises to the mitochondrion. The protein localises to the mitochondrion inner membrane. In terms of biological role, mitochondrial membrane ATP synthase (F(1)F(0) ATP synthase or Complex V) produces ATP from ADP in the presence of a proton gradient across the membrane which is generated by electron transport complexes of the respiratory chain. F-type ATPases consist of two structural domains, F(1) - containing the extramembraneous catalytic core, and F(0) - containing the membrane proton channel, linked together by a central stalk and a peripheral stalk. During catalysis, ATP synthesis in the catalytic domain of F(1) is coupled via a rotary mechanism of the central stalk subunits to proton translocation. Part of the complex F(0) domain and the peripheric stalk, which acts as a stator to hold the catalytic alpha(3)beta(3) subcomplex and subunit a/atp6 static relative to the rotary elements. The polypeptide is ATP synthase subunit 4, mitochondrial (atp-3) (Neurospora crassa (strain ATCC 24698 / 74-OR23-1A / CBS 708.71 / DSM 1257 / FGSC 987)).